A 124-amino-acid chain; its full sequence is Fluoride-specific ion channel FluC (124 aa).

Helical transmembrane passes span 1 to 21 (MGVV…RFLL), 35 to 55 (VGTL…FAYL), 68 to 88 (LLIT…YESF), and 99 to 119 (FLAY…LGYI). Na(+) is bound by residues G75 and T78.

The protein belongs to the fluoride channel Fluc/FEX (TC 1.A.43) family.

It localises to the cell inner membrane. The catalysed reaction is fluoride(in) = fluoride(out). With respect to regulation, na(+) is not transported, but it plays an essential structural role and its presence is essential for fluoride channel function. In terms of biological role, fluoride-specific ion channel. Important for reducing fluoride concentration in the cell, thus reducing its toxicity. The protein is Fluoride-specific ion channel FluC of Aquifex aeolicus (strain VF5).